A 173-amino-acid polypeptide reads, in one-letter code: Transcription factor E (173 aa).

In terms of domain architecture, HTH TFE/IIEalpha-type spans 3-86; it reads DDPLVKSLLT…SWKFEEQEVI (84 aa).

The protein belongs to the TFE family. As to quaternary structure, monomer. Interaction with RNA polymerase subunits RpoF and RpoE is necessary for Tfe stimulatory transcription activity. Able to interact with Tbp and RNA polymerase in the absence of DNA promoter. Interacts both with the preinitiation and elongation complexes.

Transcription factor that plays a role in the activation of archaeal genes transcribed by RNA polymerase. Facilitates transcription initiation by enhancing TATA-box recognition by TATA-box-binding protein (Tbp), and transcription factor B (Tfb) and RNA polymerase recruitment. Not absolutely required for transcription in vitro, but particularly important in cases where Tbp or Tfb function is not optimal. It dynamically alters the nucleic acid-binding properties of RNA polymerases by stabilizing the initiation complex and destabilizing elongation complexes. Seems to translocate with the RNA polymerase following initiation and acts by binding to the non template strand of the transcription bubble in elongation complexes. The polypeptide is Transcription factor E (Methanobrevibacter smithii (strain ATCC 35061 / DSM 861 / OCM 144 / PS)).